The following is a 634-amino-acid chain: DNA-directed RNA polymerase subunit gamma (634 aa).

Residues Cys-74, Cys-76, Cys-89, and Cys-92 each coordinate Zn(2+). Asp-471, Asp-473, and Asp-475 together coordinate Mg(2+).

It belongs to the RNA polymerase beta' chain family. RpoC1 subfamily. In cyanobacteria the RNAP catalytic core is composed of 2 alpha, 1 beta, 1 beta', 1 gamma and 1 omega subunit. When a sigma factor is associated with the core the holoenzyme is formed, which can initiate transcription. The cofactor is Mg(2+). It depends on Zn(2+) as a cofactor.

It catalyses the reaction RNA(n) + a ribonucleoside 5'-triphosphate = RNA(n+1) + diphosphate. DNA-dependent RNA polymerase catalyzes the transcription of DNA into RNA using the four ribonucleoside triphosphates as substrates. The polypeptide is DNA-directed RNA polymerase subunit gamma (Prochlorococcus marinus subsp. pastoris (strain CCMP1986 / NIES-2087 / MED4)).